The following is a 476-amino-acid chain: Homeobox even-skipped homolog protein 2 (476 aa).

2 disordered regions span residues 82–113 (TGSE…AEAD) and 142–185 (KGYA…GSGA). 2 stretches are compositionally biased toward low complexity: residues 84-96 (SEST…SSAA) and 147-159 (SGSA…SASG). Residues 160–183 (SGLGSLHGGSGGSGGSAALGGSGS) show a composition bias toward gly residues. Residues 188–247 (VRRYRTAFTREQIARLEKEFYRENYVSRPRRCELAAALNLPETTIKVWFQNRRMKDKRQR) constitute a DNA-binding region (homeobox).

Belongs to the even-skipped homeobox family.

The protein resides in the nucleus. The chain is Homeobox even-skipped homolog protein 2 (EVX2) from Homo sapiens (Human).